The sequence spans 137 residues: Large ribosomal subunit protein uL16 (137 aa).

It belongs to the universal ribosomal protein uL16 family. As to quaternary structure, part of the 50S ribosomal subunit.

In terms of biological role, binds 23S rRNA and is also seen to make contacts with the A and possibly P site tRNAs. This is Large ribosomal subunit protein uL16 from Streptococcus equi subsp. zooepidemicus (strain H70).